Consider the following 338-residue polypeptide: 4-hydroxythreonine-4-phosphate dehydrogenase (338 aa).

Substrate-binding residues include His139 and Thr140. A divalent metal cation-binding residues include His169, His214, and His270. Substrate contacts are provided by Lys278, Asn287, and Arg296.

This sequence belongs to the PdxA family. As to quaternary structure, homodimer. The cofactor is Zn(2+). Mg(2+) is required as a cofactor. Co(2+) serves as cofactor.

The protein resides in the cytoplasm. It catalyses the reaction 4-(phosphooxy)-L-threonine + NAD(+) = 3-amino-2-oxopropyl phosphate + CO2 + NADH. It participates in cofactor biosynthesis; pyridoxine 5'-phosphate biosynthesis; pyridoxine 5'-phosphate from D-erythrose 4-phosphate: step 4/5. In terms of biological role, catalyzes the NAD(P)-dependent oxidation of 4-(phosphooxy)-L-threonine (HTP) into 2-amino-3-oxo-4-(phosphooxy)butyric acid which spontaneously decarboxylates to form 3-amino-2-oxopropyl phosphate (AHAP). This Desulfosudis oleivorans (strain DSM 6200 / JCM 39069 / Hxd3) (Desulfococcus oleovorans) protein is 4-hydroxythreonine-4-phosphate dehydrogenase.